Here is a 527-residue protein sequence, read N- to C-terminus: Chorismate synthase (527 aa).

Catalysis depends on residues histidine 17, histidine 104, and aspartate 485.

It belongs to the chorismate synthase family.

The protein resides in the cytoplasm. Its subcellular location is the cytosol. It carries out the reaction 5-O-(1-carboxyvinyl)-3-phosphoshikimate = chorismate + phosphate. It catalyses the reaction FMNH2 + NADP(+) = FMN + NADPH + 2 H(+). It functions in the pathway metabolic intermediate biosynthesis; chorismate biosynthesis; chorismate from D-erythrose 4-phosphate and phosphoenolpyruvate: step 7/7. In terms of biological role, bifunctional chorismate synthase and flavin reductase. Catalyzes the conversion of 5-enolpyruvylshikimate 3-phosphate (EPSP) to form chorismate. Acts also as a flavin reductase (FR) able to generate reduced flavin mononucleotide in the presence of NADPH. The chain is Chorismate synthase from Plasmodium falciparum (isolate 3D7).